We begin with the raw amino-acid sequence, 553 residues long: Syntaxin-binding protein 4 (553 aa).

A phosphoserine mark is found at S10, S12, S99, and S212. Residues 19–105 (AFQMITIAKE…RLESAWEIAF (87 aa)) form the PDZ domain. A coiled-coil region spans residues 291 to 417 (SSEADEMERL…VLDCQLRKSE (127 aa)). S463 is subject to Phosphoserine. One can recognise a WW domain in the interval 496–529 (DCLPYGWEEAYTADGIKYFINHVTQTTSWIHPVM).

In terms of assembly, interacts with STX4A. Post-translationally, phosphorylated on Ser-99 by PKB/AKT2 after insulin treatment. Phosphorylation on Ser-99 abolishes the interaction with STX4A.

It is found in the cytoplasm. In terms of biological role, plays a role in the translocation of transport vesicles from the cytoplasm to the plasma membrane. Inhibits the translocation of SLC2A4 from intracellular vesicles to the plasma membrane by STX4A binding and preventing the interaction between STX4A and VAMP2. Stimulation with insulin disrupts the interaction with STX4A, leading to increased levels of SLC2A4 at the plasma membrane. May also play a role in the regulation of insulin release by pancreatic beta cells after stimulation by glucose. The chain is Syntaxin-binding protein 4 (STXBP4) from Homo sapiens (Human).